We begin with the raw amino-acid sequence, 177 residues long: Large ribosomal subunit protein uL6 (177 aa).

It belongs to the universal ribosomal protein uL6 family. Part of the 50S ribosomal subunit.

Functionally, this protein binds to the 23S rRNA, and is important in its secondary structure. It is located near the subunit interface in the base of the L7/L12 stalk, and near the tRNA binding site of the peptidyltransferase center. The chain is Large ribosomal subunit protein uL6 from Citrobacter koseri (strain ATCC BAA-895 / CDC 4225-83 / SGSC4696).